The chain runs to 730 residues: Transient receptor potential cation channel subfamily V member 5 (730 aa).

At 1-327 (MGACPPKAKG…SFKWKKYGRP (327 aa)) the chain is on the cytoplasmic side. ANK repeat units follow at residues 44–74 (IRDSPLLQAAKENDLRLLKILLLNQSCDFQQ), 78–107 (VGETALHVAALYDNLEAATLLMEAAPELAK), 116–145 (VGQTALHIAVMNQNLNLVRALLARGASVSA), 162–191 (YGEHPLSFAACVGSEEIVRLLIEHGADIRA), 195–228 (LGNTVLHILILQPNKTFACQMYNLLLSYDEHSDH), and 239–268 (QGLTPFKLAGVEGNTVMFQHLMQKRKHVQW). The chain crosses the membrane as a helical span at residues 328–348 (YFCVLASLYILYMICFTTCCI). At 349-385 (YRPLKLRDDNRTDPRDITILQQKLLQEAYVTHQDNIR) the chain is on the extracellular side. Residue N358 is glycosylated (N-linked (GlcNAc...) asparagine). A helical transmembrane segment spans residues 386-408 (LVGELVTVTGAVIILLLEIPDIF). The Cytoplasmic segment spans residues 409–419 (RVGASRYFGQT). The chain crosses the membrane as a helical span at residues 420–442 (ILGGPFHVIIITYASLVLLTMVM). Residues 443-448 (RLTNMN) lie on the Extracellular side of the membrane. Residues 449–469 (GEVVPLSFALVLGWCSVMYFA) traverse the membrane as a helical segment. Topologically, residues 470–492 (RGFQMLGPFTIMIQKMIFGDLMR) are cytoplasmic. The helical transmembrane segment at 493–513 (FCWLMAVVILGFASAFHITFQ) threads the bilayer. Positions 524–544 (SDYPTALFSTFELFLTIIDGP) form an intramembrane region, pore-forming. D542 contributes to the Ca(2+) binding site. A helical membrane pass occupies residues 557 to 577 (ITYAAFAIIATLLMLNLFIAM). At 578–730 (MGDTHWRVAQ…EGDGEEVYHF (153 aa)) the chain is on the cytoplasmic side. The segment at 598–602 (VATTV) is interaction with S100A10. Positions 650–653 (AFKC) are involved in Ca(2+)-dependent inactivation. T685 is modified (phosphothreonine). A Phosphoserine modification is found at S689. Positions 701-730 (GWEILRRNTLGHLNLGLDLGEGDGEEVYHF) are involved in Ca(2+)-dependent inactivation.

This sequence belongs to the transient receptor (TC 1.A.4) family. TrpV subfamily. TRPV5 sub-subfamily. Homotetramer. Probably forms heterotetramers with TRPV6. Interacts with TRPV6. Interacts with S100A10 and probably with the ANAX2-S100A10 heterotetramer. The interaction with S100A10 is required for the trafficking to the plasma membrane. Interacts with calmodulin. Interacts with BSPRY, which results in its inactivation. Post-translationally, glycosylated. Detected in kidney cortex, in distal convoluted tubules and cortical collecting ducts (at protein level). Detected in duodenum, jejunum, ileum, kidney and placenta.

Its subcellular location is the cell membrane. The protein localises to the apical cell membrane. The enzyme catalyses Ca(2+)(in) = Ca(2+)(out). Activated by WNK3. Functionally, constitutively active calcium selective cation channel thought to be involved in Ca(2+) reabsorption in kidney and intestine. Required for normal Ca(2+) reabsorption in the kidney distal convoluted tubules. The channel is activated by low internal calcium level and the current exhibits an inward rectification. A Ca(2+)-dependent feedback regulation includes fast channel inactivation and slow current decay. Heteromeric assembly with TRPV6 seems to modify channel properties. TRPV5-TRPV6 heteromultimeric concatemers exhibit voltage-dependent gating. This Oryctolagus cuniculus (Rabbit) protein is Transient receptor potential cation channel subfamily V member 5 (Trpv5).